Reading from the N-terminus, the 225-residue chain is Small ribosomal subunit protein uS2 (225 aa).

This sequence belongs to the universal ribosomal protein uS2 family.

The protein is Small ribosomal subunit protein uS2 of Metallosphaera sedula (strain ATCC 51363 / DSM 5348 / JCM 9185 / NBRC 15509 / TH2).